A 464-amino-acid polypeptide reads, in one-letter code: UDP-N-acetylmuramate--L-alanine ligase (464 aa).

Residue 115–121 (GSHGKTT) coordinates ATP.

The protein belongs to the MurCDEF family.

Its subcellular location is the cytoplasm. It carries out the reaction UDP-N-acetyl-alpha-D-muramate + L-alanine + ATP = UDP-N-acetyl-alpha-D-muramoyl-L-alanine + ADP + phosphate + H(+). It participates in cell wall biogenesis; peptidoglycan biosynthesis. Functionally, cell wall formation. In Pelagibacter ubique (strain HTCC1062), this protein is UDP-N-acetylmuramate--L-alanine ligase.